The primary structure comprises 147 residues: 3-dehydroquinate dehydratase (147 aa).

Residue tyrosine 26 is the Proton acceptor of the active site. Residues asparagine 77, histidine 83, and aspartate 90 each coordinate substrate. Residue histidine 103 is the Proton donor of the active site. Residues 104-105 and arginine 114 each bind substrate; that span reads LS.

It belongs to the type-II 3-dehydroquinase family. As to quaternary structure, homododecamer.

The catalysed reaction is 3-dehydroquinate = 3-dehydroshikimate + H2O. It participates in metabolic intermediate biosynthesis; chorismate biosynthesis; chorismate from D-erythrose 4-phosphate and phosphoenolpyruvate: step 3/7. Its function is as follows. Catalyzes a trans-dehydration via an enolate intermediate. The protein is 3-dehydroquinate dehydratase of Proteus mirabilis (strain HI4320).